Reading from the N-terminus, the 412-residue chain is Putative phosphate permease PF1020 (412 aa).

The next 10 helical transmembrane spans lie at 7–27, 50–70, 88–108, 119–139, 143–163, 187–207, 213–233, 298–318, 335–355, and 384–404; these read MLAD…AWAI, AVII…KTVT, VLIF…VIAT, SIIG…IVNW, IKVV…AYLV, FWIG…VLHG, GFLK…SLIL, WILA…GYKV, FTID…GMPI, and DIII…GIIF.

Belongs to the inorganic phosphate transporter (PiT) (TC 2.A.20) family.

The protein localises to the cell membrane. In terms of biological role, potential transporter for phosphate. The polypeptide is Putative phosphate permease PF1020 (Pyrococcus furiosus (strain ATCC 43587 / DSM 3638 / JCM 8422 / Vc1)).